Here is a 572-residue protein sequence, read N- to C-terminus: BOS complex subunit ncln (572 aa).

The first 35 residues, 1-35 (MFEEAGEVLENMLKVSFPLSLVLFLVLVCPLRAEA), serve as a signal peptide directing secretion. The Extracellular segment spans residues 36–530 (AHEFSVYRMQ…TMNAYRVKPA (495 aa)). N-linked (GlcNAc...) asparagine glycosylation is found at Asn108, Asn234, and Asn436. A helical transmembrane segment spans residues 531–551 (IFDLLLAVCIASYLGVLYLAI). Residues 552 to 572 (QNFGLLYGFLRRVTAPRVKQH) are Cytoplasmic-facing.

This sequence belongs to the nicastrin family. As to quaternary structure, component of the multi-pass translocon (MPT) complex.

The protein resides in the endoplasmic reticulum membrane. Its function is as follows. Component of the multi-pass translocon (MPT) complex that mediates insertion of multi-pass membrane proteins into the lipid bilayer of membranes. The MPT complex takes over after the SEC61 complex: following membrane insertion of the first few transmembrane segments of proteins by the SEC61 complex, the MPT complex occludes the lateral gate of the SEC61 complex to promote insertion of subsequent transmembrane regions. Antagonizes Nodal signaling and subsequent organization of axial structures during mesodermal patterning. Ectopic expression results in cyclopia, due to a defect in mesendoderm patterning. The sequence is that of BOS complex subunit ncln (ncln) from Danio rerio (Zebrafish).